The primary structure comprises 162 residues: Regulator of sigma D (162 aa).

Belongs to the Rsd/AlgQ family. Interacts with RpoD.

The protein resides in the cytoplasm. In terms of biological role, binds RpoD and negatively regulates RpoD-mediated transcription activation by preventing the interaction between the primary sigma factor RpoD with the catalytic core of the RNA polymerase and with promoter DNA. May be involved in replacement of the RNA polymerase sigma subunit from RpoD to RpoS during the transition from exponential growth to the stationary phase. The chain is Regulator of sigma D from Salmonella choleraesuis (strain SC-B67).